The chain runs to 352 residues: Protein RecA (352 aa).

68–75 (GPESSGKT) is a binding site for ATP.

It belongs to the RecA family.

It is found in the cytoplasm. Can catalyze the hydrolysis of ATP in the presence of single-stranded DNA, the ATP-dependent uptake of single-stranded DNA by duplex DNA, and the ATP-dependent hybridization of homologous single-stranded DNAs. It interacts with LexA causing its activation and leading to its autocatalytic cleavage. In Clostridium perfringens (strain SM101 / Type A), this protein is Protein RecA.